A 586-amino-acid chain; its full sequence is Pescadillo homolog (586 aa).

Residues 1–54 (MGGLEKKKYERGSATNYITRNKARKKLQLSLPDFRRLCILKGIYPHEPKHKKKV) form a required for 28S ribosomal RNA processing region. The interval 1–257 (MGGLEKKKYE…PKIESQAQAE (257 aa)) is sufficient for nucleolar localization. Lys98 carries the post-translational modification N6-acetyllysine. A sufficient for interaction with MAP1B region spans residues 305–414 (VTAQEEDRRK…LLLPVAEYFP (110 aa)). The region spanning 321-414 (KHKKLFEGLK…LLLPVAEYFP (94 aa)) is the BRCT domain. Residues 447–508 (GEDPGNLEEE…QQRLGGKKPQ (62 aa)) form a disordered region. The span at 451 to 491 (GNLEEEEEDEDDEGDDSEGDGDVAVENEEEVVEAESEEEEE) shows a compositional bias: acidic residues. A Glycyl lysine isopeptide (Lys-Gly) (interchain with G-Cter in SUMO1); alternate cross-link involves residue Lys515. Residue Lys515 forms a Glycyl lysine isopeptide (Lys-Gly) (interchain with G-Cter in SUMO2); alternate linkage. The segment at 537-586 (MMKKREKYLYQKIMFGKRRKIREANKLAEKRKAHDDAVRSEKKAKRTRPV) is required for 28S ribosomal RNA processing. The span at 562–577 (KLAEKRKAHDDAVRSE) shows a compositional bias: basic and acidic residues. The segment at 562–586 (KLAEKRKAHDDAVRSEKKAKRTRPV) is disordered.

Belongs to the pescadillo family. As to quaternary structure, component of the PeBoW complex, composed of BOP1, PES1 and WDR12. The complex is held together by BOP1, which interacts with PES1 via its N-terminal domain and with WDR12 via a high-affinity interaction between the seven-bladed beta-propeller domains of the 2 proteins. The PeBoW complex associates with the 66S pre-ribosome. The PeBoW complex also associates with DDX27, PES1 interacts directly with DDX27. Interacts with IRS1 and UBTF. May interact with MAP1B. In terms of processing, sumoylated.

The protein resides in the nucleus. It localises to the nucleolus. It is found in the nucleoplasm. Its subcellular location is the chromosome. In terms of biological role, component of the PeBoW complex, which is required for maturation of 28S and 5.8S ribosomal RNAs and formation of the 60S ribosome. The polypeptide is Pescadillo homolog (Pes1) (Rattus norvegicus (Rat)).